Here is a 124-residue protein sequence, read N- to C-terminus: MRHYEIVFIVHPDQSEQVPAMIERYKSTITSHGGQIHRVEDWGRRQLAYMIEKLAKAHYVCMNIECDQTTLDELEHAFKFNDAVLRHLIVKMKKAETGPSPMMKEVQREEAKKAAAAQPTEAQA.

Residues 96-124 form a disordered region; sequence ETGPSPMMKEVQREEAKKAAAAQPTEAQA. The segment covering 114–124 has biased composition (low complexity); it reads AAAAQPTEAQA.

The protein belongs to the bacterial ribosomal protein bS6 family.

Binds together with bS18 to 16S ribosomal RNA. The sequence is that of Small ribosomal subunit protein bS6 from Burkholderia mallei (strain ATCC 23344).